We begin with the raw amino-acid sequence, 196 residues long: MLDRIKGCFTESIQTQIAAAEALPDAISRAAMTLVQSLLNGNKILCCGNGTSAANAQHFAASMINRFETERPSLPAIALNADNVVLTAIANDRLHDEVYAKQVRALGHAGDVLLAISTRGNSRDIVKAVEAAVTRDMTIVALTGYDGGELAGLLGQQDVEIRIPSHRSARVQELHMLTVNCLCDLIDNTLFPHQDD.

The region spanning leucine 34 to aspartate 196 is the SIS domain.

This sequence belongs to the SIS family. DiaA subfamily. In terms of assembly, homotetramer; dimer of dimers.

Required for the timely initiation of chromosomal replication via direct interactions with the DnaA initiator protein. This Yersinia enterocolitica serotype O:8 / biotype 1B (strain NCTC 13174 / 8081) protein is DnaA initiator-associating protein DiaA.